The primary structure comprises 360 residues: Protein MGF 360-1L (360 aa).

The protein belongs to the asfivirus MGF 360 family.

Plays a role in virus cell tropism, and may be required for efficient virus replication in macrophages. The protein is Protein MGF 360-1L of African swine fever virus (strain Badajoz 1971 Vero-adapted) (Ba71V).